We begin with the raw amino-acid sequence, 284 residues long: Bifunctional protein FolD (284 aa).

NADP(+) contacts are provided by residues 166–168 (GAS) and Ile-232.

This sequence belongs to the tetrahydrofolate dehydrogenase/cyclohydrolase family. Homodimer.

It carries out the reaction (6R)-5,10-methylene-5,6,7,8-tetrahydrofolate + NADP(+) = (6R)-5,10-methenyltetrahydrofolate + NADPH. It catalyses the reaction (6R)-5,10-methenyltetrahydrofolate + H2O = (6R)-10-formyltetrahydrofolate + H(+). The protein operates within one-carbon metabolism; tetrahydrofolate interconversion. Catalyzes the oxidation of 5,10-methylenetetrahydrofolate to 5,10-methenyltetrahydrofolate and then the hydrolysis of 5,10-methenyltetrahydrofolate to 10-formyltetrahydrofolate. This chain is Bifunctional protein FolD, found in Shewanella sp. (strain W3-18-1).